The chain runs to 284 residues: 4-diphosphocytidyl-2-C-methyl-D-erythritol kinase (284 aa).

Lys-10 is an active-site residue. 95–105 lines the ATP pocket; it reads PVAAGLGGGSS. The active site involves Asp-137.

The protein belongs to the GHMP kinase family. IspE subfamily.

It catalyses the reaction 4-CDP-2-C-methyl-D-erythritol + ATP = 4-CDP-2-C-methyl-D-erythritol 2-phosphate + ADP + H(+). The protein operates within isoprenoid biosynthesis; isopentenyl diphosphate biosynthesis via DXP pathway; isopentenyl diphosphate from 1-deoxy-D-xylulose 5-phosphate: step 3/6. Its function is as follows. Catalyzes the phosphorylation of the position 2 hydroxy group of 4-diphosphocytidyl-2C-methyl-D-erythritol. The chain is 4-diphosphocytidyl-2-C-methyl-D-erythritol kinase from Levilactobacillus brevis (strain ATCC 367 / BCRC 12310 / CIP 105137 / JCM 1170 / LMG 11437 / NCIMB 947 / NCTC 947) (Lactobacillus brevis).